A 206-amino-acid chain; its full sequence is Orotate phosphoribosyltransferase (206 aa).

5-phospho-alpha-D-ribose 1-diphosphate is bound by residues lysine 26, 72-73, arginine 99, lysine 100, lysine 103, histidine 105, and 124-132; these read YK and DDVMTSGFS. Orotate contacts are provided by threonine 128 and arginine 157.

This sequence belongs to the purine/pyrimidine phosphoribosyltransferase family. PyrE subfamily. In terms of assembly, homodimer. The cofactor is Mg(2+).

The enzyme catalyses orotidine 5'-phosphate + diphosphate = orotate + 5-phospho-alpha-D-ribose 1-diphosphate. The protein operates within pyrimidine metabolism; UMP biosynthesis via de novo pathway; UMP from orotate: step 1/2. Its function is as follows. Catalyzes the transfer of a ribosyl phosphate group from 5-phosphoribose 1-diphosphate to orotate, leading to the formation of orotidine monophosphate (OMP). The protein is Orotate phosphoribosyltransferase of Buchnera aphidicola subsp. Baizongia pistaciae (strain Bp).